A 270-amino-acid chain; its full sequence is Ribitol operon repressor (270 aa).

One can recognise an HTH lacI-type domain in the interval 1–61; that stretch reads MKKITIYDLA…INRQASMLRS (61 aa). Positions 6-25 form a DNA-binding region, H-T-H motif; it reads IYDLAELSGVSASAVSAILN.

In terms of biological role, repressor for the genes of the ribitol operon. Binds D-ribulose as an inducer. The chain is Ribitol operon repressor (rbtR) from Klebsiella aerogenes (Enterobacter aerogenes).